The primary structure comprises 259 residues: UPF0246 protein PP_1289 (259 aa).

This sequence belongs to the UPF0246 family.

The protein is UPF0246 protein PP_1289 of Pseudomonas putida (strain ATCC 47054 / DSM 6125 / CFBP 8728 / NCIMB 11950 / KT2440).